The following is a 124-amino-acid chain: Large ribosomal subunit protein bL12 (124 aa).

The interval 99-124 (KEGMNKEDAEKAKADLEAAGAKVELK) is disordered. Residues 101–114 (GMNKEDAEKAKADL) are compositionally biased toward basic and acidic residues. Residues 115–124 (EAAGAKVELK) are compositionally biased toward low complexity.

Belongs to the bacterial ribosomal protein bL12 family. In terms of assembly, homodimer. Part of the ribosomal stalk of the 50S ribosomal subunit. Forms a multimeric L10(L12)X complex, where L10 forms an elongated spine to which 2 to 4 L12 dimers bind in a sequential fashion. Binds GTP-bound translation factors.

Functionally, forms part of the ribosomal stalk which helps the ribosome interact with GTP-bound translation factors. Is thus essential for accurate translation. The polypeptide is Large ribosomal subunit protein bL12 (Campylobacter hominis (strain ATCC BAA-381 / DSM 21671 / CCUG 45161 / LMG 19568 / NCTC 13146 / CH001A)).